We begin with the raw amino-acid sequence, 350 residues long: Probable poly-beta-1,6-N-acetyl-D-glucosamine export protein (350 aa).

The next 10 helical transmembrane spans lie at 8-28 (LVYLRAIICAIIIITHLLTQI), 40-60 (LVLQFYIRNIVIFGTPCFIIL), 83-103 (YILIPYILMGLFYSYSESLLT), 119-139 (QWYGYFIVVIMQFFILSYIIF), 146-166 (FNSKILLLLSFILQQSFLYYF), 182-202 (LSENTIIFGWIFYFFLGAYMG), 216-236 (LVIMIVLAVATYFVFIALANG), 254-274 (IMFIVILGICTHFKTMLFNTI), 276-296 (MISAFSFFIYLLHPIILDSLF), and 308-328 (VFLAISLLFILGLCIGVGMIL).

The protein belongs to the acyltransferase 3 family.

It localises to the cell membrane. Its function is as follows. Presumably involved in the export of the biofilm adhesin polysaccharide poly-beta-1,6-N-acetyl-D-glucosamine (PNAG, also referred to as PIA) across the cell membrane. The protein is Probable poly-beta-1,6-N-acetyl-D-glucosamine export protein (icaC) of Staphylococcus aureus (strain NCTC 8325 / PS 47).